The primary structure comprises 218 residues: MANSSPVYDWFQERLEIQDIADDFSTKYVPPHVNIFYCLGGITLVCFLIQFATGFAMTFYYKPTVAEAYSSVQYLMTDVSFGWLIRSVHRWSASMMVLMLILHVFRVYLTGGFKRPRELTWVTGVTMAVITVSFGVTGYSLPWDQVGYWAVKIVSGVPAAIPVVGDFMVELLRGGESVGQSTLTRFYSLHTFVMPWLLAVFMLMHFLMIRKQGISGPL.

Residues 35–55 form a helical membrane-spanning segment; the sequence is IFYCLGGITLVCFLIQFATGF. Position 38 (Cys-38) interacts with heme c. 2 residues coordinate heme b: His-89 and His-103. Transmembrane regions (helical) follow at residues 93–113, 119–139, and 189–209; these read ASMMVLMLILHVFRVYLTGGF, LTWVTGVTMAVITVSFGVTGY, and LHTFVMPWLLAVFMLMHFLMI. Positions 190 and 205 each coordinate heme b.

The protein belongs to the cytochrome b family. PetB subfamily. In terms of assembly, the 4 large subunits of the cytochrome b6-f complex are cytochrome b6, subunit IV (17 kDa polypeptide, PetD), cytochrome f and the Rieske protein, while the 4 small subunits are PetG, PetL, PetM and PetN. The complex functions as a dimer. The cofactor is heme b. Heme c serves as cofactor.

Its subcellular location is the cellular thylakoid membrane. Its function is as follows. Component of the cytochrome b6-f complex, which mediates electron transfer between photosystem II (PSII) and photosystem I (PSI), cyclic electron flow around PSI, and state transitions. The polypeptide is Cytochrome b6 (Synechococcus sp. (strain CC9311)).